The chain runs to 636 residues: Topoisomerase I damage affected protein 7 (636 aa).

Residues 1 to 18 (MNSNSTIGRTTLGESDTI) show a composition bias toward polar residues. Disordered stretches follow at residues 1–33 (MNSN…NSRS), 87–109 (TLVS…QYDP), 238–271 (ISSP…SSTN), 299–326 (PTSS…DDTT), and 339–362 (QSTT…STSP). The N-linked (GlcNAc...) asparagine glycan is linked to asparagine 4. Low complexity-rich tracts occupy residues 19-33 (SLSF…NSRS) and 87-108 (TLVS…SQYD). N-linked (GlcNAc...) asparagine glycosylation occurs at asparagine 257. The chain crosses the membrane as a helical span at residues 457-477 (IVGSVVGSVGGILICVLVVWF). Asparagine 492 is a glycosylation site (N-linked (GlcNAc...) asparagine). A compositionally biased stretch (polar residues) spans 510-541 (QAKEASLQAQDSGSQQRNTETASANNPFSNEF). Positions 510 to 551 (QAKEASLQAQDSGSQQRNTETASANNPFSNEFNFKARGNPPP) are disordered. Lysine 512 participates in a covalent cross-link: Glycyl lysine isopeptide (Lys-Gly) (interchain with G-Cter in ubiquitin). Asparagine 557, asparagine 562, and asparagine 626 each carry an N-linked (GlcNAc...) asparagine glycan. Phosphoserine is present on serine 628.

It belongs to the TDA7 family.

Its subcellular location is the vacuole membrane. This is Topoisomerase I damage affected protein 7 (TDA7) from Saccharomyces cerevisiae (strain YJM789) (Baker's yeast).